A 348-amino-acid chain; its full sequence is Centromere protein N-B (348 aa).

It belongs to the CENP-N/CHL4 family.

It is found in the nucleus. Its subcellular location is the chromosome. The protein localises to the centromere. Probable component of a centromeric complex involved in assembly of kinetochore proteins, mitotic progression and chromosome segregation. The chain is Centromere protein N-B (cenpn-b) from Xenopus laevis (African clawed frog).